We begin with the raw amino-acid sequence, 1578 residues long: DNA-directed RNA polymerase subunit beta' (1578 aa).

Zn(2+)-binding residues include cysteine 101, cysteine 103, cysteine 115, and cysteine 118. Positions 1286, 1288, and 1290 each coordinate Mg(2+).

The protein belongs to the RNA polymerase beta' chain family. RpoC1 subfamily. In plastids the minimal PEP RNA polymerase catalytic core is composed of four subunits: alpha, beta, beta', and beta''. When a (nuclear-encoded) sigma factor is associated with the core the holoenzyme is formed, which can initiate transcription. Requires Mg(2+) as cofactor. The cofactor is Zn(2+).

The protein localises to the plastid. Its subcellular location is the chloroplast. The catalysed reaction is RNA(n) + a ribonucleoside 5'-triphosphate = RNA(n+1) + diphosphate. Its function is as follows. DNA-dependent RNA polymerase catalyzes the transcription of DNA into RNA using the four ribonucleoside triphosphates as substrates. This chain is DNA-directed RNA polymerase subunit beta', found in Tupiella akineta (Green alga).